Reading from the N-terminus, the 515-residue chain is ATP synthase subunit alpha (515 aa).

171 to 178 (GDRQTGKT) serves as a coordination point for ATP.

The protein belongs to the ATPase alpha/beta chains family. In terms of assembly, F-type ATPases have 2 components, CF(1) - the catalytic core - and CF(0) - the membrane proton channel. CF(1) has five subunits: alpha(3), beta(3), gamma(1), delta(1), epsilon(1). CF(0) has three main subunits: a(1), b(2) and c(9-12). The alpha and beta chains form an alternating ring which encloses part of the gamma chain. CF(1) is attached to CF(0) by a central stalk formed by the gamma and epsilon chains, while a peripheral stalk is formed by the delta and b chains.

The protein localises to the cell inner membrane. The enzyme catalyses ATP + H2O + 4 H(+)(in) = ADP + phosphate + 5 H(+)(out). Its function is as follows. Produces ATP from ADP in the presence of a proton gradient across the membrane. The alpha chain is a regulatory subunit. In Xanthomonas oryzae pv. oryzae (strain MAFF 311018), this protein is ATP synthase subunit alpha.